A 506-amino-acid polypeptide reads, in one-letter code: RNA-splicing ligase RtcB homolog (506 aa).

D120, C123, H228, H260, and H354 together coordinate Mn(2+). Residue 227-231 (NHYAE) coordinates GMP. GMP contacts are provided by residues 354-355 (HN), 403-406 (GGTM), S410, 429-432 (HGAG), and K505. The GMP-histidine intermediate role is filled by H429.

Belongs to the RtcB family. As to quaternary structure, catalytic component of the tRNA-splicing ligase complex. Mn(2+) is required as a cofactor.

The catalysed reaction is a 3'-end 3'-phospho-ribonucleotide-RNA + a 5'-end dephospho-ribonucleoside-RNA + GTP = a ribonucleotidyl-ribonucleotide-RNA + GMP + diphosphate. It carries out the reaction a 3'-end 2',3'-cyclophospho-ribonucleotide-RNA + a 5'-end dephospho-ribonucleoside-RNA + GTP + H2O = a ribonucleotidyl-ribonucleotide-RNA + GMP + diphosphate + H(+). Catalytic subunit of the tRNA-splicing ligase complex that acts by directly joining spliced tRNA halves to mature-sized tRNAs by incorporating the precursor-derived splice junction phosphate into the mature tRNA as a canonical 3',5'-phosphodiester. May act as an RNA ligase with broad substrate specificity, and may function toward other RNAs. In Plasmodium falciparum (isolate 3D7), this protein is RNA-splicing ligase RtcB homolog.